Consider the following 633-residue polypeptide: MHCMAVHQFSPSIVSSLPTISTYNNNHFCRFFTPKTSISPISKTKSKSSTCYPIQCTVVNNSSPSSTIVRRSANYEPPIWSFDYIQSLSTQYKGESYTRQLNKLKKEVTRMLLGLEINSLALLELIDTLQRLGISYHFKNEINTILKKKYTDNYINNNNIITNPNYNNLYAIALEFRLLRQHGYTVPQEIFNAFKDKRGKFKTCLSDDIMGVLCLYEASFYAMKHENILEETRIFSTKCLKKYMEKMENEEEKKILLLDDNNINSNLLLINHAFELPLHWRITRSEARWFIDEIYEKKQDMNSTLFEFAKLDFNIVQSTHQEDLQHLSRWWRDCKLGGKLNFARDRLMEAFLWDVGLKFEGEFSYFRRINARLFVLITIIDDIYDVYGTLEELELFTSAVERWDVKLINELPDYMKMPFFVLHNTINEMGFDVLVQQNFVNIEYLKKSWVDLCKCYLQEAKWYYSGYQPTLEEYTELGWLSIGASVILMHAYFCLTNPITKQDLKSLQLQHHYPNIIKQACLITRLADDLGTSSDELNRGDVPKSIQCYMYDNNATEDEAREHIKFLISETWKDMNKKDEDESCLSENFVEVCKNMARTALFIYENGDGHGSQNSLSKERISTLIITPINIPK.

Residues Met-1–Gln-55 constitute a chloroplast transit peptide. (2E)-geranyl diphosphate-binding residues include Arg-344, Asp-381, Asp-385, Arg-525, and Asp-528. Asp-381 and Asp-385 together coordinate Mg(2+). The DDXXD motif signature appears at Asp-381–Asp-385. 3 residues coordinate Mg(2+): Asp-528, Thr-532, and Glu-536.

Belongs to the terpene synthase family. Tpsb subfamily. It depends on Mg(2+) as a cofactor. Mn(2+) is required as a cofactor.

The protein localises to the plastid. Its subcellular location is the chloroplast. The catalysed reaction is (2E)-geranyl diphosphate = beta-myrcene + diphosphate. It functions in the pathway secondary metabolite biosynthesis; terpenoid biosynthesis. Functionally, involved in monoterpene (C10) olefins biosynthesis, constituants of cannabinoids and terpenoids-rich resins. Catalyzes strictly the conversion of (2E)-geranyl diphosphate to beta-myrcene. This Cannabis sativa (Hemp) protein is Beta-myrcene synthase TPS15CT.